Reading from the N-terminus, the 49-residue chain is Large ribosomal subunit protein bL33 (49 aa).

The protein belongs to the bacterial ribosomal protein bL33 family.

The sequence is that of Large ribosomal subunit protein bL33 from Clostridioides difficile (strain 630) (Peptoclostridium difficile).